The primary structure comprises 482 residues: ATP synthase subunit beta (482 aa).

Position 162 to 169 (162 to 169 (GGAGVGKT)) interacts with ATP.

In terms of assembly, F-type ATPases have 2 components, CF(1) - the catalytic core - and CF(0) - the membrane proton channel. CF(1) has five subunits: alpha(3), beta(3), gamma(1), delta(1), epsilon(1). CF(0) has four main subunits: a(1), b(1), b'(1) and c(9-12).

The protein resides in the cellular thylakoid membrane. It carries out the reaction ATP + H2O + 4 H(+)(in) = ADP + phosphate + 5 H(+)(out). Its activity is regulated as follows. Inhibited by dicyclohexylcarbodiimide. Functionally, produces ATP from ADP in the presence of a proton gradient across the membrane. The catalytic sites are hosted primarily by the beta subunits. In terms of biological role, the complex from the organism is particularly stable to disruption and remains functional after 6 hrs at 55 degrees Celsius. The sequence is that of ATP synthase subunit beta from Thermosynechococcus vestitus (strain NIES-2133 / IAM M-273 / BP-1).